A 156-amino-acid chain; its full sequence is Transcription elongation factor GreA (156 aa).

Residues 46-73 adopt a coiled-coil conformation; it reads AEYHAAREKQSFIEGRIKELEALLSLAE.

The protein belongs to the GreA/GreB family.

Its function is as follows. Necessary for efficient RNA polymerase transcription elongation past template-encoded arresting sites. The arresting sites in DNA have the property of trapping a certain fraction of elongating RNA polymerases that pass through, resulting in locked ternary complexes. Cleavage of the nascent transcript by cleavage factors such as GreA or GreB allows the resumption of elongation from the new 3'terminus. GreA releases sequences of 2 to 3 nucleotides. The chain is Transcription elongation factor GreA from Cereibacter sphaeroides (strain ATCC 17025 / ATH 2.4.3) (Rhodobacter sphaeroides).